We begin with the raw amino-acid sequence, 358 residues long: E3 ubiquitin-protein ligase SIS3 (358 aa).

Positions 1–27 are cleaved as a signal peptide; sequence MAMRGVDFKWYDGFFLSMLATSVIIVA. Helical transmembrane passes span 40–60, 85–105, and 125–145; these read LHIWIVVDYTTVFIFRVFMFV, VVVLSVLSLLLYPFLWAWTVI, and GFLIWLMFSYCGLLCIAFICV. The RING-type; atypical zinc-finger motif lies at 235–276; that stretch reads CLICLEEFHIGHEVRGLPCAHNFHVECIDQWLRLNVKCPRCR. Residues 336 to 358 form a disordered region; sequence TALETAENGGVPPVLTDLSPSRR.

As to expression, expressed in roots, stems, leaves, flowers and siliques.

It localises to the membrane. It carries out the reaction S-ubiquitinyl-[E2 ubiquitin-conjugating enzyme]-L-cysteine + [acceptor protein]-L-lysine = [E2 ubiquitin-conjugating enzyme]-L-cysteine + N(6)-ubiquitinyl-[acceptor protein]-L-lysine.. The protein operates within protein modification; protein ubiquitination. Its function is as follows. E3 ubiquitin protein ligase that acts as a positive regulator of sugar signaling during early seedling development. Possesses E3 ligase activity in vitro. This is E3 ubiquitin-protein ligase SIS3 (SIS3) from Arabidopsis thaliana (Mouse-ear cress).